The chain runs to 1481 residues: DNA excision repair protein ERCC-6 (1481 aa).

The interval 1 to 506 (MFHEEVPNST…GFLFKKLFKY (506 aa)) is N-terminal domain; essential for its chromatin remodeling activity. Ser-158 bears the Phosphoserine; by CDK2 mark. Lys-170 bears the N6-methylated lysine; by EHMT2 mark. A Glycyl lysine isopeptide (Lys-Gly) (interchain with G-Cter in SUMO2) cross-link involves residue Lys-256. Residue Lys-298 is modified to N6-methylated lysine; by EHMT2. The segment at 309–452 (AIETKADQRS…RKVARRQDDG (144 aa)) is disordered. A compositionally biased stretch (basic residues) spans 327–337 (RLKKHSRKLQR). Basic and acidic residues predominate over residues 353–363 (KPLEPEVRPEA). Composition is skewed to acidic residues over residues 378–390 (DGEE…EEEG) and 420–435 (EIDD…EDEA). A phosphoserine mark is found at Ser-428 and Ser-429. N6-methylated lysine; by EHMT2 is present on Lys-444. Phosphoserine occurs at positions 482 and 485. The region spanning 515–691 (WELHCQQAGG…WSLFDFIFPG (177 aa)) is the Helicase ATP-binding domain. Position 528 to 535 (528 to 535 (DEMGLGKT)) interacts with ATP. Residues 642–645 (DEGH) carry the DEAH box motif. Residues 839–998 (VVESLLKIWH…RRFFKSNDLY (160 aa)) form the Helicase C-terminal domain. Disordered regions lie at residues 1040–1096 (LGTD…NRAS), 1114–1238 (SVMS…DRSS), and 1307–1372 (GHRG…GAPS). An N6-methylated lysine; by EHMT2 modification is found at Lys-1047. A compositionally biased stretch (polar residues) spans 1138-1147 (ASTSEKQGSS). The segment covering 1192 to 1201 (QPKQKAKNSK) has biased composition (basic residues). Over residues 1202 to 1212 (HCRDAKFEGTR) the composition is skewed to basic and acidic residues. Residues 1330–1345 (LPVQHPSSLTEKTQNN) are compositionally biased toward polar residues. Positions 1346–1364 (MKKEGKAHTPEHFSGKEDG) are enriched in basic and acidic residues. A CSA-interacting motif (CIM) motif is present at residues 1373-1385 (SSSLLARMRARNH). A ubiquitin-binding domain (UBD) region spans residues 1387 to 1416 (ILPERLESDSEHLAEAAAVPPCGTEHDDLL). A winged-helix domain (WHD) region spans residues 1417–1481 (VDMRNFIAFQ…GIWKLKPEYC (65 aa)). The interval 1434–1481 (STQEILQEFESKLSVAQSCVFRELLRNLCNFHRTPGGEGIWKLKPEYC) is essential for its interaction with RNA polymerase II, transcription-coupled nucleotide excision repair activity, association with chromatin after UV irradiation and for mediating the UV-induced translocation of ERRC8 to the nuclear matrix.

This sequence belongs to the SNF2/RAD54 helicase family. In terms of assembly, homodimer. Binds DNA. Interacts with ERCC8. Interacts with RNA polymerase II; interaction is enhanced by UV irradiation. Component of the B-WICH complex, at least composed of SMARCA5/SNF2H, BAZ1B/WSTF, SF3B1, DEK, MYO1C, ERCC6, MYBBP1A and DDX21. Interacts with KIAA1530/UVSSA. Interacts with ELOA and CUL5; the interaction is induced by DNA damaging agents or by inhibitors of RNA polymerase II elongation. Interacts (via WHD region) with RIF1. Interacts with SMARCC2/BAF170, SMARCB1/BAF47 and the neuron-specific chromatin remodeling complex (nBAF complex). Interacts with ERCC5/XPG (via C-terminus); the interaction stimulates ERCC6/CSB binding to DNA repair bubble and ERCC6/CSB ATPase activity. May form a complex composed of RNA polymerase II, ERCC6/CSB and ERCC5/XPG which associates with the DNA repair bubble during transcription-coupled nucleotide excision repair. Interacts with CAND1, CSTF1, DDX3X, DDX5, DDX17, DDX23, DHX36, HDAC1, HNRNPU, MTA2, PRPF3, PSMD3, RBBP4, SFPQ, SMARCA1, SMARCA2, TOP1, USP7 and XRCC5. Post-translationally, phosphorylated in a cell cycle-dependent manner at Ser-158 by cyclin A-CDK2 in response to DNA damage. Phosphorylation at this site promotes the intramolecular interaction of the N-terminal domain with the helicase ATP-binding domain, thereby probably releasing the inhibitory effect of the N-terminal domain on its ATPase activity. Phosphorylation is essential for its chromatin remodeling activity. Ubiquitinated at the C-terminus. Ubiquitination by the CSA complex leads to ERCC6 proteasomal degradation in a UV-dependent manner. Stabilized following interaction with KIAA1530/UVSSA, which promotes recruitment of deubiquitinating enzyme USP7, leading to deubiquitination of ERCC6 thereby preventing UV-induced degradation of ERCC6 by the proteasome.

Its subcellular location is the nucleus. The protein resides in the chromosome. It catalyses the reaction ATP + H2O = ADP + phosphate + H(+). In terms of biological role, essential factor involved in transcription-coupled nucleotide excision repair (TC-NER), a process during which RNA polymerase II-blocking lesions are rapidly removed from the transcribed strand of active genes. Plays a central role in the initiation of the TC-NER process: specifically recognizes and binds RNA polymerase II stalled at a lesion, and mediates recruitment of ERCC8/CSA, initiating DNA damage excision by TFIIH recruitment. Upon DNA-binding, it locally modifies DNA conformation by wrapping the DNA around itself, thereby modifying the interface between stalled RNA polymerase II and DNA. Acts as a chromatin remodeler at DSBs; DNA-dependent ATPase-dependent activity is essential for this function. Plays an important role in regulating the choice of the DNA double-strand breaks (DSBs) repair pathway and G2/M checkpoint activation; DNA-dependent ATPase activity is essential for this function. Regulates the DNA repair pathway choice by inhibiting non-homologous end joining (NHEJ), thereby promoting the homologous recombination (HR)-mediated repair of DSBs during the S/G2 phases of the cell cycle. Mediates the activation of the ATM- and CHEK2-dependent DNA damage responses thus preventing premature entry of cells into mitosis following the induction of DNA DSBs. Remodels chromatin by evicting histones from chromatin flanking DSBs, limiting RIF1 accumulation at DSBs thereby promoting BRCA1-mediated HR. Required for stable recruitment of ELOA and CUL5 to DNA damage sites. Also involved in UV-induced translocation of ERCC8 to the nuclear matrix. Essential for neuronal differentiation and neuritogenesis; regulates transcription and chromatin remodeling activities required during neurogenesis. The protein is DNA excision repair protein ERCC-6 (Ercc6) of Mus musculus (Mouse).